Here is a 575-residue protein sequence, read N- to C-terminus: Lysine--tRNA ligase (575 aa).

Residues E412 and E419 each contribute to the Mg(2+) site.

This sequence belongs to the class-II aminoacyl-tRNA synthetase family. As to quaternary structure, homodimer. Requires Mg(2+) as cofactor.

It is found in the cytoplasm. The catalysed reaction is tRNA(Lys) + L-lysine + ATP = L-lysyl-tRNA(Lys) + AMP + diphosphate. The protein is Lysine--tRNA ligase of Bacteroides fragilis (strain YCH46).